Reading from the N-terminus, the 224-residue chain is MKKAVVLLSGGMDSAAVIALAQEQGFAVYALSVRYGQRHTSELDAAARVAAAQGVVAHKVVDVDLRSIGGSALTDDIDVPDAGGDGIPVTYVPARNTIMLSLALGWAEVVGANDLFCGVNAVDYSGYPDCRPEFVRAFEVLANLATKAGVEGVGLRVHAPLQFLSKADIVREGVRLGVDFGLTVSCYRADADGRACGHCDACRLRAAGFSDAGVPDPTHYAILS.

8-18 is an ATP binding site; it reads LSGGMDSAAVI. Residues C186, C196, C199, and C202 each contribute to the Zn(2+) site.

The protein belongs to the QueC family. Zn(2+) is required as a cofactor.

The enzyme catalyses 7-carboxy-7-deazaguanine + NH4(+) + ATP = 7-cyano-7-deazaguanine + ADP + phosphate + H2O + H(+). It functions in the pathway purine metabolism; 7-cyano-7-deazaguanine biosynthesis. In terms of biological role, catalyzes the ATP-dependent conversion of 7-carboxy-7-deazaguanine (CDG) to 7-cyano-7-deazaguanine (preQ(0)). The protein is 7-cyano-7-deazaguanine synthase of Xanthomonas euvesicatoria pv. vesicatoria (strain 85-10) (Xanthomonas campestris pv. vesicatoria).